Consider the following 88-residue polypeptide: Small ribosomal subunit protein bS16c (88 aa).

As to quaternary structure, component of the chloroplast small ribosomal subunit (SSU). Mature 70S chloroplast ribosomes of higher plants consist of a small (30S) and a large (50S) subunit. The 30S small subunit contains 1 molecule of ribosomal RNA (16S rRNA) and 24 different proteins. The 50S large subunit contains 3 rRNA molecules (23S, 5S and 4.5S rRNA) and 33 different proteins.

The protein resides in the plastid. The protein localises to the chloroplast. Its function is as follows. Component of the chloroplast ribosome (chloro-ribosome), a dedicated translation machinery responsible for the synthesis of chloroplast genome-encoded proteins, including proteins of the transcription and translation machinery and components of the photosynthetic apparatus. This Spinacia oleracea (Spinach) protein is Small ribosomal subunit protein bS16c.